Here is a 132-residue protein sequence, read N- to C-terminus: uncharacterized protein (132 aa).

This is an uncharacterized protein from Escherichia coli.